The following is a 622-amino-acid chain: Lamin Dm0 (622 aa).

Positions Met-1 to Ser-50 are disordered. At Ser-2 the chain carries N-acetylserine. A head region spans residues Ser-2–Val-56. A phosphothreonine mark is found at Thr-10, Thr-12, and Thr-20. A compositionally biased stretch (pro residues) spans Pro-21–Ser-34. Residues Ser-25 and Ser-34 each carry the phosphoserine modification. Thr-39 carries the post-translational modification Phosphothreonine. Phosphoserine is present on residues Ser-41, Ser-42, and Ser-45. Position 47 is a phosphothreonine (Thr-47). In terms of domain architecture, IF rod spans Glu-54 to Leu-410. The coil 1A stretch occupies residues Lys-55–Asp-91. Residues Thr-92–Ile-103 form a linker 1 region. The interval Phe-104–Ser-241 is coil 1B. Ser-235 is subject to Phosphoserine. Positions Arg-242–Lys-265 are linker 2. Tyr-249 is subject to Phosphotyrosine. A phosphoserine mark is found at Ser-250 and Ser-311. Residues Gln-266–Ala-408 are coil 2. Positions Arg-409–Cys-619 are tail. Thr-413 and Thr-435 each carry phosphothreonine. Residues Arg-429–Thr-440 are compositionally biased toward polar residues. The tract at residues Arg-429–Lys-448 is disordered. A Phosphoserine modification is found at Ser-442. Residues Lys-446–Val-451 carry the Nuclear localization signal motif. Residues Ser-455 and Ser-459 each carry the phosphoserine modification. Positions Ala-461 to Ser-588 constitute an LTD domain. The residue at position 595 (Ser-595) is a Phosphoserine. Thr-597 bears the Phosphothreonine mark. Residues Glu-603–Met-622 form a disordered region. A compositionally biased stretch (polar residues) spans Leu-605–Met-622. Ser-615 carries the phosphoserine modification. At Cys-619 the chain carries Cysteine methyl ester. Cys-619 is lipidated: S-farnesyl cysteine. The propeptide at Ala-620–Met-622 is removed in mature form.

This sequence belongs to the intermediate filament family. Interacts directly with LBR. Interacts with MAN1. Interacts with Ote. Post-translationally, three forms of lamin have been identified in D.melanogaster, lamin Dm0 is rapidly processed to lamin Dm1 in the cytoplasm, Dm1 is then assembled in the nuclear envelope and is then phosphorylated, forming lamin Dm2. Constitutively expressed in all tissues (at protein level). Expressed in spermatocytes (at protein level).

It localises to the nucleus. The protein resides in the nucleus inner membrane. The protein localises to the nucleus envelope. It is found in the nucleus lamina. Its subcellular location is the cytoplasm. It localises to the cytoskeleton. The protein resides in the spindle pole. Functionally, lamins are components of the nuclear lamina, a fibrous layer on the nucleoplasmic side of the inner nuclear membrane, which is thought to provide a framework for the nuclear envelope and may also interact with chromatin. May have a role in the localization of the LEM domain proteins Ote, bocks and MAN1 to the nuclear membrane. In spermatocytes, plays a role in maintaining type-A lamin LamC nuclear localization; regulates meiotic cytokinesis by maintaining the structure of the spindle envelope, and by contributing to the formation of the contractile ring and central spindle. Required for nuclear migration and to link the microtubule organizing center (MTOC) to the nucleus. In addition, is required for nuclear envelope localization of klar. In Drosophila melanogaster (Fruit fly), this protein is Lamin Dm0.